The chain runs to 207 residues: Outer-membrane lipoprotein LolB (207 aa).

The signal sequence occupies residues 1–21 (MPLPDFRFIRLLPLAALVLTA). Residue C22 is the site of N-palmitoyl cysteine attachment. The S-diacylglycerol cysteine moiety is linked to residue C22.

It belongs to the LolB family. As to quaternary structure, monomer.

Its subcellular location is the cell outer membrane. Plays a critical role in the incorporation of lipoproteins in the outer membrane after they are released by the LolA protein. This chain is Outer-membrane lipoprotein LolB, found in Escherichia coli O6:K15:H31 (strain 536 / UPEC).